Reading from the N-terminus, the 379-residue chain is S-(hydroxymethyl)glutathione dehydrogenase (379 aa).

C47 is a Zn(2+) binding site. An NAD(+)-binding site is contributed by H48. H69, E70, C99, C102, C105, C113, and C176 together coordinate Zn(2+). Residues 201-206 (GAGCIG), D225, and 296-298 (IGV) contribute to the NAD(+) site.

It belongs to the zinc-containing alcohol dehydrogenase family. Class-III subfamily. Zn(2+) is required as a cofactor.

It catalyses the reaction a primary alcohol + NAD(+) = an aldehyde + NADH + H(+). The enzyme catalyses a secondary alcohol + NAD(+) = a ketone + NADH + H(+). It carries out the reaction S-(hydroxymethyl)glutathione + NADP(+) = S-formylglutathione + NADPH + H(+). The catalysed reaction is S-(hydroxymethyl)glutathione + NAD(+) = S-formylglutathione + NADH + H(+). It catalyses the reaction S-nitrosoglutathione + NADH + H(+) = S-(hydroxysulfenamide)glutathione + NAD(+). In terms of biological role, oxidizes long-chain alcohols and, in the presence of glutathione, is able to oxidize formaldehyde. Also acts as a S-nitroso-glutathione reductase by catalyzing the NADH-dependent reduction of S-nitrosoglutathione, thereby regulating protein S-nitrosylation. This is S-(hydroxymethyl)glutathione dehydrogenase (FLD1) from Komagataella pastoris (Yeast).